Reading from the N-terminus, the 285-residue chain is NAD kinase (285 aa).

Residue aspartate 68 is the Proton acceptor of the active site. NAD(+) is bound by residues aspartate 68–glycine 69, asparagine 142–aspartate 143, arginine 153, lysine 170, aspartate 172, and glutamine 242.

The protein belongs to the NAD kinase family. The cofactor is a divalent metal cation.

The protein localises to the cytoplasm. It catalyses the reaction NAD(+) + ATP = ADP + NADP(+) + H(+). In terms of biological role, involved in the regulation of the intracellular balance of NAD and NADP, and is a key enzyme in the biosynthesis of NADP. Catalyzes specifically the phosphorylation on 2'-hydroxyl of the adenosine moiety of NAD to yield NADP. The protein is NAD kinase of Koribacter versatilis (strain Ellin345).